A 387-amino-acid chain; its full sequence is MSTAFRWVEQARVGRARAGHLHTAHGVVPTPTFMPVGTVGTVKAMTMDSVRSTGAGIVLGNTYHLMLRPGAEKVRALGGLHRFMDWPGPILTDSGGFQVMSLGALRKLDQDGVTFNSHIDGSKHRLTPERSTDIQHALDATITMCFDECPALPAPPETIAQSMRLSMRWAARCREAFVPRAGYAQYGIIQGGTEPELRAESVRALTGIGFEGYAIGGLAVGEGQELMYATLDATVPLIPHDSPRYLMGVGTPDDLLGAVERGVDMFDCVMPTRAGRTARAYTERGTLNLRNARHADDTRPLSPHCDCLACTRHSRAYLHHLFRANEILGPMLLTWHNLAYYQRLMRGMRGAIVAGTLGAHAAGLRAEWAMEDWTPDEMPPPDLPPVP.

Residue Asp93 is the Proton acceptor of the active site. Substrate is bound by residues 93–97 (DSGGF), Asp147, Gln190, and Gly217. Residues 248–254 (GVGTPDD) are RNA binding. Asp267 (nucleophile) is an active-site residue. The interval 272–276 (TRAGR) is RNA binding; important for wobble base 34 recognition. Zn(2+)-binding residues include Cys305, Cys307, Cys310, and His336.

Belongs to the queuine tRNA-ribosyltransferase family. As to quaternary structure, homodimer. Within each dimer, one monomer is responsible for RNA recognition and catalysis, while the other monomer binds to the replacement base PreQ1. Zn(2+) serves as cofactor.

The catalysed reaction is 7-aminomethyl-7-carbaguanine + guanosine(34) in tRNA = 7-aminomethyl-7-carbaguanosine(34) in tRNA + guanine. It participates in tRNA modification; tRNA-queuosine biosynthesis. In terms of biological role, catalyzes the base-exchange of a guanine (G) residue with the queuine precursor 7-aminomethyl-7-deazaguanine (PreQ1) at position 34 (anticodon wobble position) in tRNAs with GU(N) anticodons (tRNA-Asp, -Asn, -His and -Tyr). Catalysis occurs through a double-displacement mechanism. The nucleophile active site attacks the C1' of nucleotide 34 to detach the guanine base from the RNA, forming a covalent enzyme-RNA intermediate. The proton acceptor active site deprotonates the incoming PreQ1, allowing a nucleophilic attack on the C1' of the ribose to form the product. After dissociation, two additional enzymatic reactions on the tRNA convert PreQ1 to queuine (Q), resulting in the hypermodified nucleoside queuosine (7-(((4,5-cis-dihydroxy-2-cyclopenten-1-yl)amino)methyl)-7-deazaguanosine). The polypeptide is Queuine tRNA-ribosyltransferase (Gluconacetobacter diazotrophicus (strain ATCC 49037 / DSM 5601 / CCUG 37298 / CIP 103539 / LMG 7603 / PAl5)).